The primary structure comprises 359 residues: UPF0283 membrane protein RHE_CH02332 (359 aa).

Residues 1–61 (MSKPPSDLPR…EDPFINPDRD (61 aa)) are disordered. Transmembrane regions (helical) follow at residues 77–97 (FGKI…GLWT) and 111–131 (LGYA…ALVI).

This sequence belongs to the UPF0283 family.

It localises to the cell inner membrane. This chain is UPF0283 membrane protein RHE_CH02332, found in Rhizobium etli (strain ATCC 51251 / DSM 11541 / JCM 21823 / NBRC 15573 / CFN 42).